A 313-amino-acid chain; its full sequence is Pyrimidine-specific ribonucleoside hydrolase RihA (313 aa).

His240 is an active-site residue.

This sequence belongs to the IUNH family. RihA subfamily.

In terms of biological role, hydrolyzes cytidine or uridine to ribose and cytosine or uracil, respectively. The chain is Pyrimidine-specific ribonucleoside hydrolase RihA from Enterobacter sp. (strain 638).